A 94-amino-acid chain; its full sequence is Ferredoxin-like protein (94 aa).

4Fe-4S ferredoxin-type domains follow at residues 20–52 (PHIR…RETN) and 53–83 (GKVT…WEWP).

The protein to ferredoxins from P.putida and C.tartarivorum, ferredoxin I from A.vinelandii, ferredoxin II from D.desulfuricans.

Its function is as follows. Could be a 3Fe-4S cluster-containing protein. This is Ferredoxin-like protein (fixX) from Azotobacter vinelandii.